The primary structure comprises 210 residues: Mating-type-like protein ALPHA2, silenced copy at MTL3 (210 aa).

A DNA-binding region (homeobox; TALE-type) is located at residues 108–170; the sequence is ASYRGHRFTR…NRRRKQKSIY (63 aa).

It belongs to the TALE/M-ATYP homeobox family.

Its subcellular location is the nucleus. Its function is as follows. Mating type proteins are sequence specific DNA-binding proteins that act as master switches in yeast differentiation by controlling gene expression in a cell type-specific fashion. The chain is Mating-type-like protein ALPHA2, silenced copy at MTL3 (MTL3alpha2) from Candida glabrata (strain ATCC 2001 / BCRC 20586 / JCM 3761 / NBRC 0622 / NRRL Y-65 / CBS 138) (Yeast).